An 838-amino-acid polypeptide reads, in one-letter code: Polyribonucleotide nucleotidyltransferase (838 aa).

Mg(2+) contacts are provided by Asp-494 and Asp-500. A KH domain is found at 561 to 620 (PRMESMLIDKGKIKNVIGAGGKNVREICEKTGAKIEISQDGTVMIYAVGREAIESAKDMI). Positions 630–697 (GKIYSGEVCE…DKDHIQLSMR (68 aa)) constitute an S1 motif domain. Residues 747–757 (GGASAGRNGRG) show a composition bias toward gly residues. Positions 747-838 (GGASAGRNGR…PAAPKKPRFF (92 aa)) are disordered. Positions 788 to 810 (AGSSGYSSDSSSGNTKSSSSESS) are enriched in low complexity. Over residues 811–820 (GGTGGRGRNG) the composition is skewed to gly residues.

The protein belongs to the polyribonucleotide nucleotidyltransferase family. Mg(2+) serves as cofactor.

Its subcellular location is the cytoplasm. The catalysed reaction is RNA(n+1) + phosphate = RNA(n) + a ribonucleoside 5'-diphosphate. Involved in mRNA degradation. Catalyzes the phosphorolysis of single-stranded polyribonucleotides processively in the 3'- to 5'-direction. The chain is Polyribonucleotide nucleotidyltransferase from Anaplasma phagocytophilum (strain HZ).